The primary structure comprises 206 residues: Ras-related protein Ral-B (206 aa).

21–29 (GSGGVGKSA) lines the GTP pocket. The Effector region signature appears at 43–51 (YEPTKADSY). GTP-binding positions include 68 to 72 (DTAGQ), 128 to 131 (NKSD), and 158 to 160 (SAK). A disordered region spans residues 181-206 (MSENKDKNGRKSGKSKKSFKERCCLL). Position 203 is a cysteine methyl ester (C203). Residue C203 is the site of S-geranylgeranyl cysteine attachment. Positions 204–206 (CLL) are cleaved as a propeptide — removed in mature form.

Belongs to the small GTPase superfamily. Ras family. Interacts with EXOC2/Sec5 and EXOC8/Exo84. Interacts (via effector domain) with RALBP1. Post-translationally, prenylation is essential for membrane localization. The farnesylated form confers resistance to the proapoptotic and anti-anchorage-dependent growth effects of some geranylgeranyltransferase I inhibitors.

The protein resides in the cell membrane. It localises to the midbody. The catalysed reaction is GTP + H2O = GDP + phosphate + H(+). Alternates between an inactive form bound to GDP and an active form bound to GTP. Activated by a guanine nucleotide-exchange factor (GEF) and inactivated by a GTPase-activating protein (GAP). In terms of biological role, multifunctional GTPase involved in a variety of cellular processes including gene expression, cell migration, cell proliferation, oncogenic transformation and membrane trafficking. Accomplishes its multiple functions by interacting with distinct downstream effectors. Acts as a GTP sensor for GTP-dependent exocytosis of dense core vesicles. Required both to stabilize the assembly of the exocyst complex and to localize functional exocyst complexes to the leading edge of migrating cells. Required for suppression of apoptosis. In late stages of cytokinesis, upon completion of the bridge formation between dividing cells, mediates exocyst recruitment to the midbody to drive abscission. Involved in ligand-dependent receptor mediated endocytosis of the EGF and insulin receptors. The sequence is that of Ras-related protein Ral-B (Ralb) from Rattus norvegicus (Rat).